The primary structure comprises 462 residues: Exodeoxyribonuclease 7 large subunit (462 aa).

Belongs to the XseA family. Heterooligomer composed of large and small subunits.

The protein localises to the cytoplasm. It catalyses the reaction Exonucleolytic cleavage in either 5'- to 3'- or 3'- to 5'-direction to yield nucleoside 5'-phosphates.. Its function is as follows. Bidirectionally degrades single-stranded DNA into large acid-insoluble oligonucleotides, which are then degraded further into small acid-soluble oligonucleotides. The protein is Exodeoxyribonuclease 7 large subunit of Proteus mirabilis (strain HI4320).